The primary structure comprises 146 residues: ATP synthase epsilon chain 2 (146 aa).

The protein belongs to the ATPase epsilon chain family. F-type ATPases have 2 components, CF(1) - the catalytic core - and CF(0) - the membrane proton channel. CF(1) has five subunits: alpha(3), beta(3), gamma(1), delta(1), epsilon(1). CF(0) has three main subunits: a, b and c.

It localises to the cell inner membrane. Functionally, produces ATP from ADP in the presence of a proton gradient across the membrane. The chain is ATP synthase epsilon chain 2 from Cereibacter sphaeroides (strain ATCC 17023 / DSM 158 / JCM 6121 / CCUG 31486 / LMG 2827 / NBRC 12203 / NCIMB 8253 / ATH 2.4.1.) (Rhodobacter sphaeroides).